The chain runs to 383 residues: Acetylornithine deacetylase (383 aa).

Residue H80 coordinates Zn(2+). Residue D82 is part of the active site. Residue D112 participates in Zn(2+) binding. Residue E144 is part of the active site. The Zn(2+) site is built by E145, E169, and H355.

This sequence belongs to the peptidase M20A family. ArgE subfamily. As to quaternary structure, homodimer. Zn(2+) is required as a cofactor. The cofactor is Co(2+). Requires glutathione as cofactor.

Its subcellular location is the cytoplasm. It catalyses the reaction N(2)-acetyl-L-ornithine + H2O = L-ornithine + acetate. The protein operates within amino-acid biosynthesis; L-arginine biosynthesis; L-ornithine from N(2)-acetyl-L-ornithine (linear): step 1/1. Its function is as follows. Catalyzes the hydrolysis of the amide bond of N(2)-acetylated L-amino acids. Cleaves the acetyl group from N-acetyl-L-ornithine to form L-ornithine, an intermediate in L-arginine biosynthesis pathway, and a branchpoint in the synthesis of polyamines. In Shigella flexneri serotype 5b (strain 8401), this protein is Acetylornithine deacetylase.